Reading from the N-terminus, the 1112-residue chain is Electrogenic sodium bicarbonate cotransporter 4 (1112 aa).

Basic and acidic residues predominate over residues methionine 1–glutamate 13. 3 disordered regions span residues methionine 1–glycine 80, lysine 220–threonine 255, and glycine 439–glutamate 469. The Cytoplasmic segment spans residues methionine 1–serine 513. Polar residues-rich tracts occupy residues glutamine 53–aspartate 67 and serine 233–serine 244. A compositionally biased stretch (gly residues) spans serine 444–glycine 465. Residues isoleucine 514–glycine 536 traverse the membrane as a helical segment. Topologically, residues aspartate 537–glutamate 547 are extracellular. Residues serine 548 to phenylalanine 579 traverse the membrane as a helical segment. Over glutamate 580–arginine 598 the chain is Cytoplasmic. A helical membrane pass occupies residues leucine 599–isoleucine 620. At isoleucine 621–aspartate 734 the chain is on the extracellular side. The chain crosses the membrane as a helical span at residues leucine 735–leucine 753. Residues lysine 754 to aspartate 772 are Cytoplasmic-facing. Residues phenylalanine 773 to glutamine 792 traverse the membrane as a helical segment. The Extracellular segment spans residues threonine 793–proline 820. A helical membrane pass occupies residues tryptophan 821–phenylalanine 839. Over methionine 840–lysine 858 the chain is Cytoplasmic. Residues alanine 859–leucine 875 form a helical membrane-spanning segment. At cysteine 876–glycine 880 the chain is on the extracellular side. The helical transmembrane segment at leucine 881 to methionine 900 threads the bilayer. Topologically, residues glutamate 901 to arginine 920 are cytoplasmic. Residues valine 921–leucine 940 form a helical membrane-spanning segment. Over lysine 941 to methionine 945 the chain is Extracellular. Residues proline 946–tryptophan 966 traverse the membrane as a helical segment. Over aspartate 967–arginine 992 the chain is Cytoplasmic. The helical transmembrane segment at isoleucine 993 to leucine 1010 threads the bilayer. Topologically, residues lysine 1011–alanine 1015 are extracellular. The chain crosses the membrane as a helical span at residues alanine 1016–leucine 1033. At aspartate 1034–leucine 1112 the chain is on the cytoplasmic side. A compositionally biased stretch (basic and acidic residues) spans lysine 1055–proline 1074. The tract at residues lysine 1055 to leucine 1112 is disordered.

Belongs to the anion exchanger (TC 2.A.31) family. Observed in hepatocytes and in the apical region of bile duct intrahepatic cholangiocytes of liver. Also observed in uroepithelium cells lining the outer pelvic wall of the kidney (at protein level). Highly expressed in colon, distal colon, liver, kidney and testis. Moderate expression in duodenum and stomach and weak expression in heart. In kidney, very weakly expressed in the inner medulla, but abundantly expressed in cortex and outer medulla in the medullary thick ascending and cortical thick ascending limbs of the loop of Henle.

The protein resides in the basolateral cell membrane. It localises to the apical cell membrane. The enzyme catalyses 2 hydrogencarbonate(out) + Na(+)(out) = 2 hydrogencarbonate(in) + Na(+)(in). It carries out the reaction 3 hydrogencarbonate(out) + Na(+)(out) = 3 hydrogencarbonate(in) + Na(+)(in). Its function is as follows. Mediates sodium- and bicarbonate-dependent electrogenic sodium bicarbonate cotransport, with a Na(+):HCO3(-) stoichiometry varying from 1:2 to 1:3. In Rattus norvegicus (Rat), this protein is Electrogenic sodium bicarbonate cotransporter 4.